We begin with the raw amino-acid sequence, 706 residues long: Polyribonucleotide nucleotidyltransferase (706 aa).

Mg(2+) is bound by residues D483 and D489. The region spanning 550–609 (PRITTIWVKTDKIRDVIGTGGKNIRNITETTGVTVDIEDTGRINIASTSKEACDLAIQMI) is the KH domain. One can recognise an S1 motif domain in the interval 619-687 (GKLYMGIVKK…KNGKVKLSRK (69 aa)).

It belongs to the polyribonucleotide nucleotidyltransferase family. Requires Mg(2+) as cofactor.

The protein resides in the cytoplasm. It carries out the reaction RNA(n+1) + phosphate = RNA(n) + a ribonucleoside 5'-diphosphate. In terms of biological role, involved in mRNA degradation. Catalyzes the phosphorolysis of single-stranded polyribonucleotides processively in the 3'- to 5'-direction. This chain is Polyribonucleotide nucleotidyltransferase, found in Pelobacter propionicus (strain DSM 2379 / NBRC 103807 / OttBd1).